We begin with the raw amino-acid sequence, 1863 residues long: Breast cancer type 1 susceptibility protein (1863 aa).

Met-1 carries the N-acetylmethionine modification. The segment at 24 to 65 adopts an RING-type zinc-finger fold; sequence CPICLELIKEPVSTKCDHIFCKFCMLKLLNQKKGPSQCPLCK. Lys-109 participates in a covalent cross-link: Glycyl lysine isopeptide (Lys-Gly) (interchain with G-Cter in SUMO2). Residue Ser-114 is modified to Phosphoserine. The interval 230-270 is disordered; it reads ETDVTNTEHHQPSNNDLNTTEKRAAERHPEKYQGSSVSNLH. Basic and acidic residues predominate over residues 248-260; that stretch reads TTEKRAAERHPEK. Residue Lys-301 forms a Glycyl lysine isopeptide (Lys-Gly) (interchain with G-Cter in SUMO2) linkage. Residues 306–338 form a disordered region; that stretch reads NKSKQPGLARSQHNRWAGSKETCNDRRTPSTEK. The segment covering 327–338 has biased composition (basic and acidic residues); that stretch reads TCNDRRTPSTEK. Residue Lys-339 forms a Glycyl lysine isopeptide (Lys-Gly) (interchain with G-Cter in SUMO2) linkage. Phosphoserine occurs at positions 395, 398, 423, and 434. Residues Lys-443, Lys-459, and Lys-519 each participate in a glycyl lysine isopeptide (Lys-Gly) (interchain with G-Cter in SUMO2) cross-link. Residues 534-544 are compositionally biased toward low complexity; that stretch reads QGTNQTEQNGQ. Residues 534–570 form a disordered region; sequence QGTNQTEQNGQVMNITNSGHENKTKGDSIQNEKNPNP. Ser-551 is subject to Phosphoserine. Glycyl lysine isopeptide (Lys-Gly) (interchain with G-Cter in SUMO2) cross-links involve residues Lys-583 and Lys-654. Residues 654 to 709 are disordered; that stretch reads KYNQMPVRHSRNLQLMEGKEPATGAKKSNKPNEQTSKRHDSDTFPELKLTNAPGSF. Residues Ser-694, Ser-708, and Ser-725 each carry the phosphoserine modification. Residues Lys-734 and Lys-739 each participate in a glycyl lysine isopeptide (Lys-Gly) (interchain with G-Cter in SUMO2) cross-link. Residues Ser-753 and Ser-840 each carry the phosphoserine modification. Residues Lys-918 and Lys-987 each participate in a glycyl lysine isopeptide (Lys-Gly) (interchain with G-Cter in SUMO2) cross-link. Ser-988 is subject to Phosphoserine; by CHEK2. A Phosphoserine modification is found at Ser-1009. Residue Lys-1079 forms a Glycyl lysine isopeptide (Lys-Gly) (interchain with G-Cter in SUMO2) linkage. Ser-1143 carries the post-translational modification Phosphoserine; by ATR; in vitro. The segment at 1181–1216 is disordered; the sequence is VQKGELSRSPSPFTHTHLAQGYRRGAKKLESSEENL. Phosphoserine is present on residues Ser-1189, Ser-1191, Ser-1211, Ser-1217, and Ser-1218. Position 1280 is a phosphoserine; by ATR; in vitro (Ser-1280). The disordered stretch occupies residues 1322-1387; that stretch reads KQMRHQSESQ…VSEDCSGLSS (66 aa). Ser-1328, Ser-1336, and Ser-1342 each carry phosphoserine. The segment covering 1373 to 1387 has biased composition (polar residues); sequence ESETSVSEDCSGLSS. Ser-1387 is modified (phosphoserine; by ATM and ATR). Residue Thr-1394 is modified to Phosphothreonine; by ATR; in vitro. The segment at 1397–1424 is interaction with PALB2; sequence RDTMQHNLIKLQQEMAELEAVLEQHGSQ. Ser-1423 is subject to Phosphoserine; by ATM and ATR. Residues 1440-1505 form a disordered region; it reads EDLRNPEQST…SSPSKCPSLD (66 aa). The segment covering 1445–1470 has biased composition (polar residues); the sequence is PEQSTSEKAVLTSQKSSEYPISQNPE. Ser-1457 is subject to Phosphoserine; by ATR; in vitro. The residue at position 1524 (Ser-1524) is a Phosphoserine; by ATM. A Phosphoserine modification is found at Ser-1542. Residues 1565–1596 are disordered; that stretch reads ESGISLFSDDPESDPSEDRAPESARVGNIPSS. BRCT domains lie at 1642 to 1736 and 1756 to 1855; these read STER…DFEV and QDRK…TYLI.

Heterodimer with BARD1. Part of the BRCA1-associated genome surveillance complex (BASC), which contains BRCA1, MSH2, MSH6, MLH1, ATM, BLM, PMS2 and the MRE11-RAD50-NBN protein (MRN) complex. This association could be a dynamic process changing throughout the cell cycle and within subnuclear domains. Component of the BRCA1-A complex, at least composed of BRCA1, BARD1, UIMC1/RAP80, ABRAXAS1, BRCC3/BRCC36, BABAM2 and BABAM1/NBA1. Interacts (via the BRCT domains) with ABRAXAS1 (phosphorylated form); this is important for recruitment to sites of DNA damage. Can form a heterotetramer with two molecules of ABRAXAS1 (phosphorylated form). Component of the BRCA1-RBBP8 complex. Interacts (via the BRCT domains) with RBBP8 ('Ser-327' phosphorylated form); the interaction ubiquitinates RBBP8, regulates CHEK1 activation, and involves RBBP8 in BRCA1-dependent G2/M checkpoint control on DNA damage. Associates with RNA polymerase II holoenzyme. Interacts with SMC1A, NELFB, DCLRE1C, CLSPN. Interacts with CHEK1, CHEK2, BAP1, BRCC3, UBXN1 and PCLAF. Interacts (via BRCT domains) with BRIP1 (phosphorylated form). Interacts with FANCD2 (ubiquitinated form). Interacts with H2AX (phosphorylated on 'Ser-140'). Interacts (via the BRCT domains) with ACACA (phosphorylated form); the interaction prevents dephosphorylation of ACACA. Part of a BRCA complex containing BRCA1, BRCA2 and PALB2. Interacts directly with PALB2; the interaction is essential for its function in HRR. Interacts directly with BRCA2; the interaction occurs only in the presence of PALB2 which serves as the bridging protein. Interacts (via the BRCT domains) with LMO4; the interaction represses the transcriptional activity of BRCA1. Interacts (via the BRCT domains) with CCAR2 (via N-terminus); the interaction represses the transcriptional activator activity of BRCA1. Interacts with EXD2. Interacts (via C-terminus) with DHX9; this interaction is direct and links BRCA1 to the RNA polymerase II holoenzyme. Interacts with DNA helicase ZGRF1; the interaction is increased following DNA damage induction. In terms of processing, phosphorylated in response to IR, UV, and various stimuli that cause checkpoint activation, probably by ATM or ATR. Phosphorylation at Ser-988 by CHEK2 regulates mitotic spindle assembly. Phosphorylation by AURKA regulates centrosomal microtubule nucleation. Post-translationally, autoubiquitinated, undergoes 'Lys-6'-linked polyubiquitination. 'Lys-6'-linked polyubiquitination does not promote degradation. As to expression, isoform 1 and isoform 3 are widely expressed. Isoform 3 is reduced or absent in several breast and ovarian cancer cell lines.

The protein localises to the nucleus. Its subcellular location is the chromosome. It is found in the cytoplasm. It catalyses the reaction S-ubiquitinyl-[E2 ubiquitin-conjugating enzyme]-L-cysteine + [acceptor protein]-L-lysine = [E2 ubiquitin-conjugating enzyme]-L-cysteine + N(6)-ubiquitinyl-[acceptor protein]-L-lysine.. It functions in the pathway protein modification; protein ubiquitination. The E3 ubiquitin-protein ligase activity is inhibited by phosphorylation by AURKA. Activity is increased by phosphatase treatment. In terms of biological role, E3 ubiquitin-protein ligase that specifically mediates the formation of 'Lys-6'-linked polyubiquitin chains and plays a central role in DNA repair by facilitating cellular responses to DNA damage. It is unclear whether it also mediates the formation of other types of polyubiquitin chains. The BRCA1-BARD1 heterodimer coordinates a diverse range of cellular pathways such as DNA damage repair, ubiquitination and transcriptional regulation to maintain genomic stability. Regulates centrosomal microtubule nucleation. Required for appropriate cell cycle arrests after ionizing irradiation in both the S-phase and the G2 phase of the cell cycle. Required for FANCD2 targeting to sites of DNA damage. Inhibits lipid synthesis by binding to inactive phosphorylated ACACA and preventing its dephosphorylation. Contributes to homologous recombination repair (HRR) via its direct interaction with PALB2, fine-tunes recombinational repair partly through its modulatory role in the PALB2-dependent loading of BRCA2-RAD51 repair machinery at DNA breaks. Component of the BRCA1-RBBP8 complex which regulates CHEK1 activation and controls cell cycle G2/M checkpoints on DNA damage via BRCA1-mediated ubiquitination of RBBP8. Acts as a transcriptional activator. This is Breast cancer type 1 susceptibility protein (BRCA1) from Homo sapiens (Human).